The chain runs to 3907 residues: Cyclo-acetoacetyl-L-tryptophan synthase (3907 aa).

Positions K2–S436 constitute a Ketosynthase family 3 (KS3) domain. Residues C176, H313, and H356 each act as for beta-ketoacyl synthase activity in the active site. A malonyl-CoA:ACP transacylase (MAT) domain region spans residues I555 to L870. Positions H937–A1074 are N-terminal hotdog fold. Residues H937–P1236 form a dehydratase (DH) domain region. The PKS/mFAS DH domain maps to H937 to S1239. The C-terminal hotdog fold stretch occupies residues L1092–S1239. The tract at residues A1386–D1573 is methyltransferase (MT) domain. Positions G2064–V2238 are ketoreductase (KR)domain. The disordered stretch occupies residues T2324–R2352. The 75-residue stretch at D2356–N2430 folds into the Carrier 1 domain. An O-(pantetheine 4'-phosphoryl)serine modification is found at S2390. Positions M2504–S2926 are condensation. Residues F2959 to D3359 are adenylation. The Carrier 2 domain maps to K3474–K3549. S3509 is subject to O-(pantetheine 4'-phosphoryl)serine. Positions L3594–E3813 are reductase (RED) domain.

This sequence in the C-terminal section; belongs to the NRP synthetase family.

It catalyses the reaction L-tryptophan + malonyl-CoA + acetyl-CoA = cyclo-acetoacetyl-L-tryptophan + CO2 + 2 CoA + H2O. Its pathway is secondary metabolite biosynthesis. Hybrid PKS-NRPS synthetase; part of the gene cluster that mediates the biosynthesis of the fungal neurotoxin cyclopiazonic acid (CPA), a nanomolar inhibitor of Ca(2+)-ATPase with a unique pentacyclic indole tetramic acid scaffold. The hybrid two module polyketide synthase-nonribosomal peptide synthetase (PKS-NRPS) cpaS incorporates acetyl-CoA, malonyl-CoA, and tryptophan (Trp) and utilizes a C-terminal redox-incompetent reductase domain to make and release the tryptophan tetramic acid, cyclo-acetoacetyl-L-tryptophan (c-AATrp), as the first intermediate in the pathway. CpaS catalyzes a Dieckmann-type cyclization on the N-acetoacetyl-Trp intermediate bound in thioester linkage to the phosphopantetheinyl arm of the T domain to form and release c-AATrp. CpaD then regiospecifically dimethylallylates c-AATrp to form beta-cyclopiazonic acid. CpaD discriminates against free Trp but accepts tryptophan-containing thiohydantoins, diketopiperazines, and linear peptides as substrates for C4-prenylation and also acts as regiospecific O-dimethylallyltransferase (DMAT) on a tyrosine-derived tetramic acid. The beta-cyclopiazonate dehydrogenase cpaO then carries out the dehydrogenation of beta-CPA to yield an unstable enimine product, which is captured by intramolecular cyclization to create the pentacyclic fused scaffold of alpha-cyclopiazonate. Finally, the cytochrome P450 monooxygenase cpaH mediates the conversion of CPA into the less toxic 2-oxocyclopiazonic acid, the end product of the CPA pathway in A.oryza. This is Cyclo-acetoacetyl-L-tryptophan synthase from Aspergillus oryzae (Yellow koji mold).